The primary structure comprises 431 residues: Glutamate-1-semialdehyde 2,1-aminomutase (431 aa).

Lysine 265 carries the post-translational modification N6-(pyridoxal phosphate)lysine.

Belongs to the class-III pyridoxal-phosphate-dependent aminotransferase family. HemL subfamily. As to quaternary structure, homodimer. The cofactor is pyridoxal 5'-phosphate.

The protein resides in the cytoplasm. It carries out the reaction (S)-4-amino-5-oxopentanoate = 5-aminolevulinate. It functions in the pathway porphyrin-containing compound metabolism; protoporphyrin-IX biosynthesis; 5-aminolevulinate from L-glutamyl-tRNA(Glu): step 2/2. This Vibrio vulnificus (strain CMCP6) protein is Glutamate-1-semialdehyde 2,1-aminomutase.